The chain runs to 452 residues: UPF0210 protein Ccel_1722 (452 aa).

It belongs to the UPF0210 family. As to quaternary structure, homodimer.

The sequence is that of UPF0210 protein Ccel_1722 from Ruminiclostridium cellulolyticum (strain ATCC 35319 / DSM 5812 / JCM 6584 / H10) (Clostridium cellulolyticum).